Consider the following 231-residue polypeptide: Cytochrome c oxidase subunit 2 (231 aa).

The Mitochondrial intermembrane segment spans residues 1-30 (MNNFFQGYNLLFQHSLFASYMDWFHSFNCS). A helical membrane pass occupies residues 31–52 (LLLGVLVFVTLLFGYLIFGTFY). Residues 53-69 (FKSKKIEYQFGELLCSI) are Mitochondrial matrix-facing. A helical transmembrane segment spans residues 70-89 (FPTIILLMQMVPSLSLLYYY). Topologically, residues 90 to 231 (GLMNLDSNLT…FKSWCFGTME (142 aa)) are mitochondrial intermembrane. Cu cation is bound by residues His164, Cys199, Glu201, Cys203, His207, and Met210. Glu201 contributes to the Mg(2+) binding site.

It belongs to the cytochrome c oxidase subunit 2 family. Component of the cytochrome c oxidase (complex IV, CIV), a multisubunit enzyme composed of a catalytic core of 3 subunits and several supernumerary subunits. The complex exists as a monomer or a dimer and forms supercomplexes (SCs) in the inner mitochondrial membrane with ubiquinol-cytochrome c oxidoreductase (cytochrome b-c1 complex, complex III, CIII). Requires Cu cation as cofactor.

It is found in the mitochondrion inner membrane. The catalysed reaction is 4 Fe(II)-[cytochrome c] + O2 + 8 H(+)(in) = 4 Fe(III)-[cytochrome c] + 2 H2O + 4 H(+)(out). Functionally, component of the cytochrome c oxidase, the last enzyme in the mitochondrial electron transport chain which drives oxidative phosphorylation. The respiratory chain contains 3 multisubunit complexes succinate dehydrogenase (complex II, CII), ubiquinol-cytochrome c oxidoreductase (cytochrome b-c1 complex, complex III, CIII) and cytochrome c oxidase (complex IV, CIV), that cooperate to transfer electrons derived from NADH and succinate to molecular oxygen, creating an electrochemical gradient over the inner membrane that drives transmembrane transport and the ATP synthase. Cytochrome c oxidase is the component of the respiratory chain that catalyzes the reduction of oxygen to water. Electrons originating from reduced cytochrome c in the intermembrane space (IMS) are transferred via the dinuclear copper A center (CU(A)) of subunit 2 and heme A of subunit 1 to the active site in subunit 1, a binuclear center (BNC) formed by heme A3 and copper B (CU(B)). The BNC reduces molecular oxygen to 2 water molecules using 4 electrons from cytochrome c in the IMS and 4 protons from the mitochondrial matrix. The chain is Cytochrome c oxidase subunit 2 from Caenorhabditis elegans.